The chain runs to 652 residues: DNA ligase (652 aa).

NAD(+)-binding positions include 29–33 (DAEYD), 78–79 (SL), and glutamate 107. The active-site N6-AMP-lysine intermediate is lysine 109. NAD(+) contacts are provided by arginine 130, glutamate 164, lysine 278, and lysine 302. Zn(2+) contacts are provided by cysteine 395, cysteine 398, cysteine 413, and cysteine 418. Residues 577–652 (ADDAILSGKT…VKDEAWLLDL (76 aa)) enclose the BRCT domain.

The protein belongs to the NAD-dependent DNA ligase family. LigA subfamily. Mg(2+) serves as cofactor. It depends on Mn(2+) as a cofactor.

The catalysed reaction is NAD(+) + (deoxyribonucleotide)n-3'-hydroxyl + 5'-phospho-(deoxyribonucleotide)m = (deoxyribonucleotide)n+m + AMP + beta-nicotinamide D-nucleotide.. Its function is as follows. DNA ligase that catalyzes the formation of phosphodiester linkages between 5'-phosphoryl and 3'-hydroxyl groups in double-stranded DNA using NAD as a coenzyme and as the energy source for the reaction. It is essential for DNA replication and repair of damaged DNA. The sequence is that of DNA ligase from Streptococcus thermophilus (strain CNRZ 1066).